We begin with the raw amino-acid sequence, 201 residues long: Large ribosomal subunit protein bL25 (201 aa).

This sequence belongs to the bacterial ribosomal protein bL25 family. CTC subfamily. Part of the 50S ribosomal subunit; part of the 5S rRNA/L5/L18/L25 subcomplex. Contacts the 5S rRNA. Binds to the 5S rRNA independently of L5 and L18.

Its function is as follows. This is one of the proteins that binds to the 5S RNA in the ribosome where it forms part of the central protuberance. The protein is Large ribosomal subunit protein bL25 of Burkholderia multivorans (strain ATCC 17616 / 249).